Consider the following 103-residue polypeptide: Histone H4 (103 aa).

Residues 1-14 (MSGRGKGGKGLGKG) show a composition bias toward gly residues. Residues 1 to 20 (MSGRGKGGKGLGKGGAKRHR) are disordered. Residues 17 to 21 (KRHRK) mediate DNA binding.

This sequence belongs to the histone H4 family. The nucleosome is a histone octamer containing two molecules each of H2A, H2B, H3 and H4 assembled in one H3-H4 heterotetramer and two H2A-H2B heterodimers. The octamer wraps approximately 147 bp of DNA.

The protein localises to the nucleus. Its subcellular location is the chromosome. Its function is as follows. Core component of nucleosome. Nucleosomes wrap and compact DNA into chromatin, limiting DNA accessibility to the cellular machineries which require DNA as a template. Histones thereby play a central role in transcription regulation, DNA repair, DNA replication and chromosomal stability. DNA accessibility is regulated via a complex set of post-translational modifications of histones, also called histone code, and nucleosome remodeling. In Volvox carteri (Green alga), this protein is Histone H4 (H4-I).